Reading from the N-terminus, the 448-residue chain is Methylenetetrahydrofolate--tRNA-(uracil-5-)-methyltransferase TrmFO (448 aa).

Residue 13 to 18 (GAGLAG) participates in FAD binding.

This sequence belongs to the MnmG family. TrmFO subfamily. It depends on FAD as a cofactor.

The protein localises to the cytoplasm. The enzyme catalyses uridine(54) in tRNA + (6R)-5,10-methylene-5,6,7,8-tetrahydrofolate + NADH + H(+) = 5-methyluridine(54) in tRNA + (6S)-5,6,7,8-tetrahydrofolate + NAD(+). It catalyses the reaction uridine(54) in tRNA + (6R)-5,10-methylene-5,6,7,8-tetrahydrofolate + NADPH + H(+) = 5-methyluridine(54) in tRNA + (6S)-5,6,7,8-tetrahydrofolate + NADP(+). In terms of biological role, catalyzes the folate-dependent formation of 5-methyl-uridine at position 54 (M-5-U54) in all tRNAs. The sequence is that of Methylenetetrahydrofolate--tRNA-(uracil-5-)-methyltransferase TrmFO from Streptococcus pyogenes serotype M5 (strain Manfredo).